Consider the following 363-residue polypeptide: Trans-2,3-enoyl-CoA reductase-like (363 aa).

A Phosphoserine modification is found at serine 37. 4 helical membrane passes run tryptophan 143 to leucine 163, asparagine 216 to isoleucine 235, valine 250 to valine 270, and isoleucine 311 to isoleucine 331.

The protein belongs to the steroid 5-alpha reductase family.

Its subcellular location is the membrane. The protein resides in the endoplasmic reticulum. The sequence is that of Trans-2,3-enoyl-CoA reductase-like (TECRL) from Bos taurus (Bovine).